The sequence spans 80 residues: CLAVATA3/ESR (CLE)-related protein 40 (80 aa).

Positions 1–25 (MAAMKYKGSVFIILVILLLSSSLLA) are cleaved as a signal peptide. The segment at 45-80 (MKKEKKIDGGTANEVEERQVPTGSDPLHHKHIPFTP) is disordered. A Hydroxyproline modification is found at proline 65.

Belongs to the CLV3/ESR signal peptide family. Mostly expressed at low levels in stems and apex, and, to a lower extent, in roots, seedlings, leaves, flowers, siliques and pollen.

It localises to the secreted. It is found in the extracellular space. In terms of biological role, extracellular signal peptide secreted by differentiated root cells that regulates root cell fate. Acts with ACR4 as a ligand-receptor pair in a signal transduction pathway, coordinating movement of the root tip and organization of cell divisions in the root meristem. Promotes cell differentiation in the distal root meristem in a dose-dependent manner, especially the transition from columella stem cells (CSC) daughters into columella cells (CCs). Induces ACR4 expression in root quiescent center (QC). Involved in WUX5 QC-specific expression pattern regulation. Regulates the transition of protophloem cells from proliferation to differentiation, thus impinging on postembryonic growth capacity of the root meristem; this signaling pathway requires CRN and CLV2. This Arabidopsis thaliana (Mouse-ear cress) protein is CLAVATA3/ESR (CLE)-related protein 40.